Consider the following 70-residue polypeptide: Putative membrane protein insertion efficiency factor (70 aa).

This sequence belongs to the UPF0161 family.

It is found in the cell membrane. Its function is as follows. Could be involved in insertion of integral membrane proteins into the membrane. This is Putative membrane protein insertion efficiency factor from Moorella thermoacetica (strain ATCC 39073 / JCM 9320).